Consider the following 95-residue polypeptide: Aspartyl/glutamyl-tRNA(Asn/Gln) amidotransferase subunit C (95 aa).

This sequence belongs to the GatC family. Heterotrimer of A, B and C subunits.

It catalyses the reaction L-glutamyl-tRNA(Gln) + L-glutamine + ATP + H2O = L-glutaminyl-tRNA(Gln) + L-glutamate + ADP + phosphate + H(+). The catalysed reaction is L-aspartyl-tRNA(Asn) + L-glutamine + ATP + H2O = L-asparaginyl-tRNA(Asn) + L-glutamate + ADP + phosphate + 2 H(+). Allows the formation of correctly charged Asn-tRNA(Asn) or Gln-tRNA(Gln) through the transamidation of misacylated Asp-tRNA(Asn) or Glu-tRNA(Gln) in organisms which lack either or both of asparaginyl-tRNA or glutaminyl-tRNA synthetases. The reaction takes place in the presence of glutamine and ATP through an activated phospho-Asp-tRNA(Asn) or phospho-Glu-tRNA(Gln). In Clostridium botulinum (strain Loch Maree / Type A3), this protein is Aspartyl/glutamyl-tRNA(Asn/Gln) amidotransferase subunit C.